A 157-amino-acid chain; its full sequence is Cell cycle regulator of non-homologous end joining (157 aa).

Met1 carries the post-translational modification N-acetylmethionine. The KBM motif lies at 1–21 (METLKSKTKTRVLPSWMTAPV). Residues 80–91 (KPWEQRSLEATD) show a composition bias toward basic and acidic residues. Residues 80-148 (KPWEQRSLEA…EEEKEEEDAL (69 aa)) form a disordered region. Positions 96–106 (SPPCSSSPGSS) are enriched in low complexity. The XLM signature appears at 147-157 (ALKYVREIFFS).

As to quaternary structure, interacts (via KBM motif) with XRCC5/Ku80 and XRCC6/Ku70 heterodimer. Interacts (via XLF motif) with TRIM28/KAP1, ATM, MRE11, NBN and RAD50. Interacts with splicing factor SF3B1. Interacts with ERCC6L2; this interaction is DNA independent.

The protein localises to the cytoplasm. Its subcellular location is the nucleus. The protein resides in the chromosome. Its function is as follows. Cell-cycle-specific regulator of classical non-homologous end joining (NHEJ) of DNA double-strand break (DSB) repair, which can act both as an activator or inhibitor of NHEJ, depending on the cell cycle phase. Acts as a regulator of DNA repair pathway choice by specifically inhibiting classical NHEJ during the S and G2 phases, thereby promoting error-free repair by homologous recombination during cell cycle phases when sister chromatids are present. Preferentially protects single-stranded overhangs at break sites by inhibiting classical NHEJ, thereby creating a local environment that favors homologous recombination. Acts via interaction with XRCC5/Ku80 and XRCC6/Ku70. In contrast, acts as an activator of NHEJ during G1 phase of the cell cycle: promotes classical NHEJ in G1 phase cells via multivalent interactions that increase the affinity of DNA damage response proteins for DSB-associated chromatin. Also involved in immunoglobulin V(D)J recombination. May also act as an indirect regulator of proteasome. The chain is Cell cycle regulator of non-homologous end joining from Mus musculus (Mouse).